The chain runs to 216 residues: Probable nicotinate-nucleotide adenylyltransferase (216 aa).

This sequence belongs to the NadD family.

The enzyme catalyses nicotinate beta-D-ribonucleotide + ATP + H(+) = deamido-NAD(+) + diphosphate. It participates in cofactor biosynthesis; NAD(+) biosynthesis; deamido-NAD(+) from nicotinate D-ribonucleotide: step 1/1. Catalyzes the reversible adenylation of nicotinate mononucleotide (NaMN) to nicotinic acid adenine dinucleotide (NaAD). This is Probable nicotinate-nucleotide adenylyltransferase from Geobacter sp. (strain M21).